The chain runs to 145 residues: 3-dehydroquinate dehydratase (145 aa).

Y23 serves as the catalytic Proton acceptor. Substrate contacts are provided by N74, H80, and D87. The active-site Proton donor is the H100. Substrate contacts are provided by residues 101–102 and R111; that span reads IS.

It belongs to the type-II 3-dehydroquinase family. Homododecamer.

It catalyses the reaction 3-dehydroquinate = 3-dehydroshikimate + H2O. It functions in the pathway metabolic intermediate biosynthesis; chorismate biosynthesis; chorismate from D-erythrose 4-phosphate and phosphoenolpyruvate: step 3/7. In terms of biological role, catalyzes a trans-dehydration via an enolate intermediate. The polypeptide is 3-dehydroquinate dehydratase (Dictyoglomus turgidum (strain DSM 6724 / Z-1310)).